Reading from the N-terminus, the 192-residue chain is Small ribosomal subunit protein uS5 (192 aa).

Positions 20-83 constitute an S5 DRBM domain; the sequence is FVDKLVHINR…EAAKRGLIRV (64 aa). Residues 162 to 192 are disordered; sequence SVAARRGLKVSALQARRRDADPADTSDAAVA.

Belongs to the universal ribosomal protein uS5 family. Part of the 30S ribosomal subunit. Contacts proteins S4 and S8.

Functionally, with S4 and S12 plays an important role in translational accuracy. Located at the back of the 30S subunit body where it stabilizes the conformation of the head with respect to the body. The chain is Small ribosomal subunit protein uS5 from Methylorubrum populi (strain ATCC BAA-705 / NCIMB 13946 / BJ001) (Methylobacterium populi).